The following is a 1036-amino-acid chain: Presequence protease, mitochondrial (1036 aa).

Residues 1–15 (MWRFSGRRGLCAVQR) constitute a mitochondrion transit peptide. Residue H104 participates in Zn(2+) binding. E107 acts as the Proton acceptor in catalysis. Zn(2+)-binding residues include H108 and E205. Residues C119 and C556 are joined by a disulfide bond. Position 759 is an N6-acetyllysine (K759). K770 is modified (N6-acetyllysine; alternate). K770 is modified (N6-succinyllysine; alternate). The segment at 806 to 833 (SKKERKPVRPHIVEKPTPSGPSGAAHVS) is disordered. K848 bears the N6-succinyllysine mark. K883 carries the N6-acetyllysine modification. At K945 the chain carries N6-succinyllysine.

Belongs to the peptidase M16 family. PreP subfamily. As to quaternary structure, monomer and homodimer; homodimerization is induced by binding of the substrate. Zn(2+) is required as a cofactor. A disulfide bond locks the enzyme in the closed conformation preventing substrate entry into the catalytic chamber.

The protein localises to the mitochondrion matrix. Its activity is regulated as follows. Mainly exists in a closed and catalytically competent conformation but a closed-to-open switch allows substrate entry into the catalytic chamber. Substrate binding induces closure and dimerization. A disulfide bond may lock the enzyme in a closed conformation preventing substrate entry into the catalytic chamber, participating in redox regulation of the enzyme. Inhibited by metal-chelating agents. Inhibited by nickel and zinc excess, and slightly activated by manganese. Its function is as follows. Metalloendopeptidase of the mitochondrial matrix that functions in peptide cleavage and degradation rather than in protein processing. Has an ATP-independent activity. Specifically cleaves peptides in the range of 5 to 65 residues. Shows a preference for cleavage after small polar residues and before basic residues, but without any positional preference. Degrades the transit peptides of mitochondrial proteins after their cleavage. Also degrades other unstructured peptides. It is also able to degrade amyloid-beta protein 40, one of the peptides produced by APP processing, when it accumulates in mitochondrion. It is a highly efficient protease, at least toward amyloid-beta protein 40. Cleaves that peptide at a specific position and is probably not processive, releasing digested peptides intermediates that can be further cleaved subsequently. It is also able to degrade amyloid-beta protein 42. This chain is Presequence protease, mitochondrial, found in Mus musculus (Mouse).